The sequence spans 501 residues: U6 snRNA (guanine-N(2))-methyltransferase THUMPD2 (501 aa).

One can recognise a THUMP domain in the interval 149–264 (TEQIQELQET…DVYSVLGIPV (116 aa)). The disordered stretch occupies residues 414–469 (LKGGEASSGPLNSQGGHTEEPGGEERLTPAEKAAVSEPVSSPFAASNQGRLDRMPP). The span at 430–442 (HTEEPGGEERLTP) shows a compositional bias: basic and acidic residues.

It belongs to the methyltransferase superfamily. In terms of assembly, part of the heterodimeric THUMPD2-TRM112 methyltransferase complex; this complex forms an active tRNA methyltransferase, where TRMT112 acts as an activator of the catalytic subunit THUMPD2.

It is found in the nucleus. It catalyses the reaction guanosine in U6 snRNA + S-adenosyl-L-methionine = N(2)-methylguanosine in U6 snRNA + S-adenosyl-L-homocysteine + H(+). Catalytic subunit of the THUMPD2-TRM112 methyltransferase complex, that specifically mediates the S-adenosyl-L-methionine-dependent N(2)-methylation of guanosine nucleotides, most probably at position 72 (m2G72), in the U6snRNA of the major spliceosome. This modification in the U6 snRNA affects the constitutive splicing efficiency of introns that have suboptimal splice sites and can impact final mRNA levels. In Bos taurus (Bovine), this protein is U6 snRNA (guanine-N(2))-methyltransferase THUMPD2.